Reading from the N-terminus, the 278-residue chain is MRAEIMAAMKVQPVIDVNAEISRRVNFIKARLIAAHATSLVLGISGGVDSSVCGRLCQLAVNELNQEQSTTDYKFVAVRLPYGVQADENEAQLAVDFIQPSSRMTVNIKPATDALHEQTMAAIVGNGESLPEQEKIDFIKGNVKARQRMIAQYEIAAFCQGLVVGTDHSAENITGFYTKFGDGACDLAPLFGLSKRQVRALGSTLGASSVLVNKAPTADLESDRPGLTDEEALGLSYEQIDDFLEGKPVTQQVEQTLSAIYQRTQHKRQPVPTIYDEL.

ATP is bound at residue Gly43–Ser50. Asp49 provides a ligand contact to Mg(2+). Arg146 serves as a coordination point for deamido-NAD(+). Thr166 provides a ligand contact to ATP. Glu171 contributes to the Mg(2+) binding site. 2 residues coordinate deamido-NAD(+): Lys179 and Asp186. Residues Lys195 and Thr217 each coordinate ATP. Residue His266 to Lys267 coordinates deamido-NAD(+).

It belongs to the NAD synthetase family. As to quaternary structure, homodimer.

It carries out the reaction deamido-NAD(+) + NH4(+) + ATP = AMP + diphosphate + NAD(+) + H(+). Its pathway is cofactor biosynthesis; NAD(+) biosynthesis; NAD(+) from deamido-NAD(+) (ammonia route): step 1/1. Its function is as follows. Catalyzes the ATP-dependent amidation of deamido-NAD to form NAD. Uses ammonia as a nitrogen source. In Pseudoalteromonas translucida (strain TAC 125), this protein is NH(3)-dependent NAD(+) synthetase.